The sequence spans 196 residues: HTH-type transcriptional regulator EcpR (196 aa).

Positions Lys138–Gln196 constitute an HTH luxR-type domain. Positions Pro162–Arg181 form a DNA-binding region, H-T-H motif.

Belongs to the EcpR/MatA family.

The protein resides in the cytoplasm. Part of the ecpRABCDE operon, which encodes the E.coli common pilus (ECP). ECP is found in both commensal and pathogenic strains and plays a dual role in early-stage biofilm development and host cell recognition. Positively regulates the expression of the ecp operon. The sequence is that of HTH-type transcriptional regulator EcpR (ecpR) from Escherichia coli (strain SE11).